The primary structure comprises 3931 residues: Replicase polyprotein 1ab (3931 aa).

The C4-type; atypical zinc finger occupies 8-28; it reads CTCTPNARVFVAEGQVYCTRC. Residues 69-182 are PCP1-alpha; it reads ECSPAGACWL…FCPFECAMAD (114 aa). Catalysis depends on for nsp1-alpha papain-like cysteine proteinase activity residues C76 and H146. Residues 199–200 form an important for host EIF2AK2 inhibition region; that stretch reads VS. Catalysis depends on for nsp1-beta papain-like cysteine proteinase activity residues C270 and H339. An OTU-like region spans residues 426-513; sequence LKRYSPPAEG…GEHWTVSVIP (88 aa). The region spanning 428–536 is the Peptidase C33 domain; it reads RYSPPAEGNC…GCCEHKGGLV (109 aa). Catalysis depends on for nsp2 cysteine proteinase activity residues C437 and H506. Disordered stretches follow at residues 809 to 868 and 1118 to 1164; these read RWTP…VGGP and TDEL…TGGV. Residues 810-819 are compositionally biased toward pro residues; the sequence is WTPPPPPPRV. A compositionally biased stretch (basic and acidic residues) spans 1139 to 1151; sequence PAKDPRMSPRESD. A run of 3 helical transmembrane segments spans residues 1221-1241, 1266-1286, and 1339-1359; these read SGYS…LFLC, GVFG…SDPV, and WHFL…AYVL. The tract at residues 1236-1359 is HD1; it reads FCLFLCYSYP…DCILAGAYVL (124 aa). Residues 1414 to 1438 are WCCH; it reads TGWRGCWTGRSPIEQPSEKPIAFAQ. The next 5 helical transmembrane spans lie at 1554 to 1574, 1607 to 1627, 1629 to 1649, 1659 to 1679, and 1695 to 1715; these read IAAL…VYVT, LCIS…GFGL, EIAL…RLSC, AIAS…PCWL, and FLIS…VSLW. Residues 1554-1715 form an HD2 region; it reads IAALHVACSM…LAVVLLVSLW (162 aa). Residues H1818, D1843, and S1897 each act as charge relay system; for serine protease nsp4 activity in the active site. 4 helical membrane-spanning segments follow: residues 2006 to 2026, 2030 to 2050, 2064 to 2084, and 2107 to 2127; these read WTPL…AVLV, FSFG…VLMI, LGFY…VTQG, and SPVP…LYLF. The segment at 2006–2127 is HD3; that stretch reads WTPLVAVGFF…HLLAIILYLF (122 aa).

The protein belongs to the arteriviridae polyprotein family. In terms of assembly, nsp1-alpha papain-like: Interacts with host RNF31. Interacts with host EIF2AK2; this interaction occurs in host stress granules and leads to EIF2AK2 inhibition. Interacts with host G3BP1; this interaction probably plays a role in Nsp1-beta-mediated inhibition of host EIF2AK2. As to quaternary structure, interacts with host DDX18; this interaction redistributes host DDX18 to the cytoplasm. In terms of assembly, interacts with host IFITM1. Interacts with host DDX5. As to quaternary structure, interacts with host OTULIN. In terms of assembly, interacts with host LGALS3. Post-translationally, specific enzymatic cleavages in vivo by its own proteases yield mature proteins. Nsp1 is autocleaved into two subunits, Nsp1-alpha and Nsp1-beta. There are two alternative pathways for processing. Either nsp4-5 is cleaved, which represents the major pathway or the nsp5-6 and nsp6-7 are processed, which represents the minor pathway. The major pathway occurs when nsp2 acts as a cofactor for nsp4.

The protein resides in the host nucleus. The protein localises to the host cytoplasm. It localises to the host membrane. It is found in the host endoplasmic reticulum. Its subcellular location is the host perinuclear region. It catalyses the reaction RNA(n) + a ribonucleoside 5'-triphosphate = RNA(n+1) + diphosphate. It carries out the reaction ATP + H2O = ADP + phosphate + H(+). The enzyme catalyses Thiol-dependent hydrolysis of ester, thioester, amide, peptide and isopeptide bonds formed by the C-terminal Gly of ubiquitin (a 76-residue protein attached to proteins as an intracellular targeting signal).. The catalysed reaction is uridylyl-uridylyl-ribonucleotide-RNA = a 3'-end uridylyl-2',3'-cyclophospho-uridine-RNA + a 5'-end dephospho-ribonucleoside-RNA. In terms of biological role, contains the activities necessary for the transcription of negative stranded RNA, leader RNA, subgenomic mRNAs and progeny virion RNA as well as proteinases responsible for the cleavage of the polyprotein into functional products. Inhibits host IFN-beta production. Plays a role in the degradation of the host transcriptional activator CREBBP protein. The degradation of host CREBBP which is a key component of the IFN enhanceosome is likely responsible for the inhibition of interferon mediated by Nsp1-alpha. Also participates in the inhibition of host NF-kappa-B activation by counteracting LUBAC-dependent induction of NF-kappa-B. Reduces host NEMO ubiquitination by blocking the interaction between the two LUBAC complex components RNF31 and SHARPIN. Its function is as follows. Plays a role in blocking host mRNA nuclear export to the cytoplasm and subversion of host protein synthesis. Additionally, inhibits the interferon-activated JAK/STAT signal transduction by mediating the ubiquitination and subsequent proteasomal degradation of host KPNA1. Repurposes the host antiviral stress granules into a proviral platform to counteract the EIF2AK2/PKR restriction, thereby regulating the host inflammatory response. Functionally, multifunctional protein that acts as a viral protease and as a viral antagonist of host immune response. Cleaves the nsp2/nsp3 site in the viral polyprotein. Displays deubiquitinating activity that cleaves both ubiquitinated and ISGylated products and therefore inhibits ubiquitin and ISG15-dependent host innate immunity. Also deubiquinates host NFKBIA, thereby interfering with NFKBIA degradation and impairing subsequent NF-kappa-B activation. In terms of biological role, plays a role in the inhibition of the immune response by interacting with host IFITM1. This interaction leads to the proteasomal degradation of the IFN-induced antiviral protein IFITM1. Cleaves the majority of cleavage sites present in the C-terminus of the polyprotein. Triggers host apoptosis through caspase-3, -8, and -9 activations. Subverts host innate immune responses through its protease activity. Targets the NF-kappa-B essential modulator NEMO and mediates its cleavage. Blocks host interferon beta induction and downstream signaling by cleaving mitochondrial MAVS, dislodging it from the mitochondria. Impairs host defense by cleaving host mRNA-decapping enzyme DCP1A to attenuate its antiviral activity. Its function is as follows. Plays a role in the initial induction of autophagosomes from host endoplasmic reticulum. Functionally, plays a role in the inhibition of host STAT3 signaling pathway by inducing the degradation of STAT3. In terms of biological role, responsible for replication and transcription of the viral RNA genome. Displays RNA and DNA duplex-unwinding activities with 5' to 3' polarity. Its function is as follows. Plays a role in viral transcription/replication and prevents the simultaneous activation of host cell dsRNA sensors, such as MDA5/IFIH1, OAS, PKR and NLRP3 inflammasome. Acts by degrading the 5'-polyuridines generated during replication of the poly(A) region of viral genomic and subgenomic RNAs. Catalyzes a two-step reaction in which a 2'3'-cyclic phosphate (2'3'-cP) is first generated by 2'-O transesterification, which is then hydrolyzed to a 3'-phosphate (3'-P). If not degraded, poly(U) RNA would hybridize with poly(A) RNA tails and activate host dsRNA sensors. Also plays a role in the inhibition of host type I interferon production by recruiting host OTULIN to promote removal of linear ubiquitination targeting host NEMO. This is Replicase polyprotein 1ab from Porcine reproductive and respiratory syndrome virus (PRRSV).